Reading from the N-terminus, the 353-residue chain is GTPase Obg (353 aa).

The Obg domain occupies 1–159 (MKFLDEAKVY…RWIWLRLKLI (159 aa)). The region spanning 160 to 327 (ADAGLVGLPN…ALRALVAVIG (168 aa)) is the OBG-type G domain. GTP is bound by residues 166 to 173 (GLPNAGKS), 191 to 195 (FTTLH), 212 to 215 (DIPG), 279 to 282 (NKID), and 308 to 310 (SGV). The Mg(2+) site is built by Ser-173 and Thr-193.

This sequence belongs to the TRAFAC class OBG-HflX-like GTPase superfamily. OBG GTPase family. As to quaternary structure, monomer. The cofactor is Mg(2+).

The protein localises to the cytoplasm. Its function is as follows. An essential GTPase which binds GTP, GDP and possibly (p)ppGpp with moderate affinity, with high nucleotide exchange rates and a fairly low GTP hydrolysis rate. Plays a role in control of the cell cycle, stress response, ribosome biogenesis and in those bacteria that undergo differentiation, in morphogenesis control. This chain is GTPase Obg, found in Rhodopseudomonas palustris (strain ATCC BAA-98 / CGA009).